A 257-amino-acid polypeptide reads, in one-letter code: NAD-capped RNA hydrolase NudC (257 aa).

Lysine 25 and arginine 69 together coordinate substrate. 2 residues coordinate Zn(2+): cysteine 98 and cysteine 101. Substrate is bound at residue glutamate 111. Cysteine 116 and cysteine 119 together coordinate Zn(2+). Position 124 (tyrosine 124) interacts with substrate. The Nudix hydrolase domain maps to 125 to 248 (PQIAPCIIVA…TVARRLIEDT (124 aa)). A divalent metal cation is bound by residues alanine 158, glutamate 174, and glutamate 178. Positions 159-180 (GFVEVGETLEQAVAREVMEESG) match the Nudix box motif. Residue 192–199 (QPWPFPQS) participates in substrate binding. Position 219 (glutamate 219) interacts with a divalent metal cation. Substrate is bound at residue alanine 241.

The protein belongs to the Nudix hydrolase family. NudC subfamily. As to quaternary structure, homodimer. Requires Mg(2+) as cofactor. Mn(2+) serves as cofactor. Zn(2+) is required as a cofactor.

It carries out the reaction a 5'-end NAD(+)-phospho-ribonucleoside in mRNA + H2O = a 5'-end phospho-adenosine-phospho-ribonucleoside in mRNA + beta-nicotinamide D-ribonucleotide + 2 H(+). The enzyme catalyses NAD(+) + H2O = beta-nicotinamide D-ribonucleotide + AMP + 2 H(+). The catalysed reaction is NADH + H2O = reduced beta-nicotinamide D-ribonucleotide + AMP + 2 H(+). In terms of biological role, mRNA decapping enzyme that specifically removes the nicotinamide adenine dinucleotide (NAD) cap from a subset of mRNAs by hydrolyzing the diphosphate linkage to produce nicotinamide mononucleotide (NMN) and 5' monophosphate mRNA. The NAD-cap is present at the 5'-end of some mRNAs and stabilizes RNA against 5'-processing. Has preference for mRNAs with a 5'-end purine. Catalyzes the hydrolysis of a broad range of dinucleotide pyrophosphates. The polypeptide is NAD-capped RNA hydrolase NudC (Shigella boydii serotype 18 (strain CDC 3083-94 / BS512)).